Here is a 370-residue protein sequence, read N- to C-terminus: DNA replication and repair protein RecF (370 aa).

ATP is bound at residue glycine 30–threonine 37.

This sequence belongs to the RecF family.

It is found in the cytoplasm. In terms of biological role, the RecF protein is involved in DNA metabolism; it is required for DNA replication and normal SOS inducibility. RecF binds preferentially to single-stranded, linear DNA. It also seems to bind ATP. The protein is DNA replication and repair protein RecF of Stutzerimonas stutzeri (strain A1501) (Pseudomonas stutzeri).